The primary structure comprises 384 residues: MKMGPLGAEADENQTVEEMKVDQFGPGHTTLPGELAPDSEPELIDSTKLIEVQVVLILAYCSIILLGVIGNSLVIHVVIKFKSMRTVTNFFIANLAVADLLVNTLCLPFTLTYTLMGEWKMGPVLCHLVPYAQGLAVQVSTITLTVIALDRHRCIVYHLESKISKQISFLIIGLAWGVSALLASPLAIFREYSLIEIIPDFEIVACTEKWPGEEKGIYGTIYSLSSLLILYVLPLGIISFSYTRIWSKLKNHVSPGAAHDHYHQRRQKTTKMLVCVVVVFAVSWLPLHAFQLAVDIDSHVLDLKEYKLIFTVFHIIAMCSTFANPLLYGWMNSNYRKAFLSAFRCEQRLDAIHSEVSVTFKAKKHLQVTKNNGPNDSFTETTNV.

The Extracellular portion of the chain corresponds to 1–54 (MKMGPLGAEADENQTVEEMKVDQFGPGHTTLPGELAPDSEPELIDSTKLIEVQV). A glycan (N-linked (GlcNAc...) asparagine) is linked at Asn13. Residues 55 to 75 (VLILAYCSIILLGVIGNSLVI) traverse the membrane as a helical segment. Residues 76 to 89 (HVVIKFKSMRTVTN) are Cytoplasmic-facing. The helical transmembrane segment at 90-110 (FFIANLAVADLLVNTLCLPFT) threads the bilayer. Topologically, residues 111–127 (LTYTLMGEWKMGPVLCH) are extracellular. A disulfide bridge links Cys126 with Cys206. The helical transmembrane segment at 128-148 (LVPYAQGLAVQVSTITLTVIA) threads the bilayer. Residues 149 to 168 (LDRHRCIVYHLESKISKQIS) lie on the Cytoplasmic side of the membrane. The helical transmembrane segment at 169–189 (FLIIGLAWGVSALLASPLAIF) threads the bilayer. Residues 190-219 (REYSLIEIIPDFEIVACTEKWPGEEKGIYG) lie on the Extracellular side of the membrane. A helical membrane pass occupies residues 220 to 240 (TIYSLSSLLILYVLPLGIISF). The Cytoplasmic portion of the chain corresponds to 241-271 (SYTRIWSKLKNHVSPGAAHDHYHQRRQKTTK). Residues 272–292 (MLVCVVVVFAVSWLPLHAFQL) form a helical membrane-spanning segment. At 293-307 (AVDIDSHVLDLKEYK) the chain is on the extracellular side. Residues 308–328 (LIFTVFHIIAMCSTFANPLLY) traverse the membrane as a helical segment. The Cytoplasmic portion of the chain corresponds to 329–384 (GWMNSNYRKAFLSAFRCEQRLDAIHSEVSVTFKAKKHLQVTKNNGPNDSFTETTNV). Cys345 carries S-palmitoyl cysteine lipidation.

It belongs to the G-protein coupled receptor 1 family.

The protein resides in the cell membrane. Its function is as follows. Receptor for neuropeptide Y and peptide YY. The protein is Neuropeptide Y receptor type 2 (NPY2R) of Bos taurus (Bovine).